The primary structure comprises 735 residues: MAKELSRDEYTVCDQCRARKIRCSREKPSCRNCGRLGLQCEWSGQGKKCNQTTLLSHTILGMGSRLEQLETALADTQKSLKRLFDGSSTISPSARCPASPASPSPRLSDKRFPDSIQSAVFTRPLGRFLVDQDRDERCFGPTSLESLMLNIKDELLQSPDTDRHTVKECVLQAQRKIDHLVGQGEEIPIGGKAPPTMPPFAILEAMIEPYFTTTHGHFPIWSKKRFTEMATALRQSAPSERDLASIVCCNNLILMAMSADSPGSHQRESMMSKQTRKTSSIDFDLITGFLTNAKRAVSNIDQLVSPHLVNVQALVSLHIVAQVYLSIGLSETLLALAIRCAKSIGVHQWHAFQGRLSDDDVNERQNLSYCLYMLDKAVCWTAGSSPSIPVSDVHFDPRLVPSENGIPSSLVAKAEMARIEETVYLEIYAVHVQARDENQVRGFAAAIMSKLQVCLTETGVDLDQIQTSLDGSASNLQLAIRYLSVQLLLIWPHKHHPDPMFQQAPEVARMCLKLLLRLWHSPPDQGSQAVFSFFLASLPSLYLYEVLISILCGRGTNRDIDMLQEFVEMLQTITDCRAEASYNRRLYQLSLIVTDVVKARRTQHKRPKPTSEGPTDPYLMSELLSPATTGYSYMNSEVQETYDSRFDGGVFQDPDGSFAPMSSITSTSGELARGSDEFLSQLRSYGKSAPGNEHFDSLAMEALGESVLFWKGVNQGASADSPSVRCDLGERLNYI.

Residues 13–40 constitute a DNA-binding region (zn(2)-C6 fungal-type); that stretch reads CDQCRARKIRCSREKPSCRNCGRLGLQC. The interval 89-110 is disordered; it reads TISPSARCPASPASPSPRLSDK. The span at 91–106 shows a compositional bias: low complexity; sequence SPSARCPASPASPSPR.

It is found in the nucleus. Functionally, transcription factor that regulates the expression of the gene cluster that mediates the biosynthesis of sphingofungins, bioactive molecules acting as sphingolipid inhibitors via inhibiting serine palmitoyl transferase (SPT). This is Transcription factor sphG from Aspergillus fumigatus (strain CBS 144.89 / FGSC A1163 / CEA10) (Neosartorya fumigata).